The following is a 452-amino-acid chain: Maltoporin (452 aa).

Positions 1-25 (MMITLRKLPLAVAVAAGVMSAQAMA) are cleaved as a signal peptide.

It belongs to the porin LamB (TC 1.B.3) family. Homotrimer formed of three 18-stranded antiparallel beta-barrels, containing three independent channels.

Its subcellular location is the cell outer membrane. The enzyme catalyses beta-maltose(in) = beta-maltose(out). Its function is as follows. Involved in the transport of maltose and maltodextrins. The protein is Maltoporin of Salmonella newport (strain SL254).